Reading from the N-terminus, the 232-residue chain is Clarin-1 (232 aa).

A helical transmembrane segment spans residues 8–28; sequence IIFCMAGVFSFACALGVVTAL. The N-linked (GlcNAc...) asparagine glycan is linked to Asn48. 2 helical membrane passes run 101-121 and 135-155; these read IILF…FFMY and LGLY…MILF. Residue Asn184 is glycosylated (N-linked (GlcNAc...) asparagine). A helical membrane pass occupies residues 186–206; sequence TTSFWVVFICFFVHFLNGLLI.

This sequence belongs to the clarin family.

Its subcellular location is the cell membrane. Its function is as follows. May have a role in the excitatory ribbon synapse junctions between hair cells and cochlear ganglion cells and presumably also in analogous synapses within the retina. This is Clarin-1 (Clrn1) from Rattus norvegicus (Rat).